We begin with the raw amino-acid sequence, 272 residues long: 2-C-methyl-D-erythritol 4-phosphate cytidylyltransferase (272 aa).

Belongs to the IspD/TarI cytidylyltransferase family. IspD subfamily.

The enzyme catalyses 2-C-methyl-D-erythritol 4-phosphate + CTP + H(+) = 4-CDP-2-C-methyl-D-erythritol + diphosphate. The protein operates within isoprenoid biosynthesis; isopentenyl diphosphate biosynthesis via DXP pathway; isopentenyl diphosphate from 1-deoxy-D-xylulose 5-phosphate: step 2/6. In terms of biological role, catalyzes the formation of 4-diphosphocytidyl-2-C-methyl-D-erythritol from CTP and 2-C-methyl-D-erythritol 4-phosphate (MEP). In Xanthomonas oryzae pv. oryzae (strain MAFF 311018), this protein is 2-C-methyl-D-erythritol 4-phosphate cytidylyltransferase.